Here is a 145-residue protein sequence, read N- to C-terminus: MNASNPCRRFPRSARVRTRAQYTIVFDTARRTSDPLLSLHWRTGDTPPRLGMAVSRKVDTRAVGRNRIKRVLRDAMRHLLPELAGGDYVIVARSAAAKATNPQIRDAFLRLLHRAGALPLPAAAGTMPPARTVHPSSLSPTEPEL.

The interval P121–L145 is disordered. Polar residues predominate over residues H134–L145.

It belongs to the RnpA family. Consists of a catalytic RNA component (M1 or rnpB) and a protein subunit.

It carries out the reaction Endonucleolytic cleavage of RNA, removing 5'-extranucleotides from tRNA precursor.. In terms of biological role, RNaseP catalyzes the removal of the 5'-leader sequence from pre-tRNA to produce the mature 5'-terminus. It can also cleave other RNA substrates such as 4.5S RNA. The protein component plays an auxiliary but essential role in vivo by binding to the 5'-leader sequence and broadening the substrate specificity of the ribozyme. The chain is Ribonuclease P protein component from Xanthomonas axonopodis pv. citri (strain 306).